Consider the following 60-residue polypeptide: Cytotoxin 5 (60 aa).

Disulfide bonds link Cys-3-Cys-21, Cys-14-Cys-38, Cys-42-Cys-53, and Cys-54-Cys-59.

This sequence belongs to the three-finger toxin family. Short-chain subfamily. Type IA cytotoxin sub-subfamily. Monomer in solution; Homodimer and oligomer in the presence of negatively charged lipids forming a pore with a size ranging between 20 and 30 Angstroms. Expressed by the venom gland.

Its subcellular location is the secreted. The protein resides in the target cell membrane. Its function is as follows. Shows cytolytic activity on many different cells by forming pore in lipid membranes. In vivo, increases heart rate or kills the animal by cardiac arrest. In addition, it binds to heparin with high affinity, interacts with Kv channel-interacting protein 1 (KCNIP1) in a calcium-independent manner, and binds to integrin alpha-V/beta-3 (ITGAV/ITGB3) with moderate affinity. This Naja mossambica (Mozambique spitting cobra) protein is Cytotoxin 5.